A 485-amino-acid chain; its full sequence is Ras-like GTPase YcjX (485 aa).

The Walker A motif motif lies at 33–40 (GLSGAGKT). GTP-binding residues include Ser-35, Gly-36, Gly-38, Lys-39, Thr-40, Ala-41, Trp-110, Ser-113, Thr-114, Arg-115, Lys-355, Asp-357, and His-358. Residues Gly-36, Gly-38, Lys-39, Thr-40, Ala-41, Trp-110, Ser-113, and Thr-114 each coordinate GDP. GDP-binding residues include Lys-355, Asp-357, His-358, Ser-395, Ala-396, and Ile-397. GTP is bound at residue Ile-397.

In terms of assembly, monomer in solution. It depends on Mg(2+) as a cofactor.

It catalyses the reaction GTP + H2O = GDP + phosphate + H(+). Its activity is regulated as follows. Alternates between an inactive form bound to GDP and an active form bound to GTP. Likely activated by a guanine nucleotide-exchange factor (GEF). Its function is as follows. Binds GTP and GDP. Has intrinsic GTPase activity. Does not hydrolyze ATP. May act as a transducer of stress responses. This is Ras-like GTPase YcjX from Shewanella oneidensis (strain ATCC 700550 / JCM 31522 / CIP 106686 / LMG 19005 / NCIMB 14063 / MR-1).